The sequence spans 145 residues: D-aminoacyl-tRNA deacylase (145 aa).

The short motif at Gly137–Pro138 is the Gly-cisPro motif, important for rejection of L-amino acids element.

It belongs to the DTD family. As to quaternary structure, homodimer.

It localises to the cytoplasm. The enzyme catalyses glycyl-tRNA(Ala) + H2O = tRNA(Ala) + glycine + H(+). It carries out the reaction a D-aminoacyl-tRNA + H2O = a tRNA + a D-alpha-amino acid + H(+). Functionally, an aminoacyl-tRNA editing enzyme that deacylates mischarged D-aminoacyl-tRNAs. Also deacylates mischarged glycyl-tRNA(Ala), protecting cells against glycine mischarging by AlaRS. Acts via tRNA-based rather than protein-based catalysis; rejects L-amino acids rather than detecting D-amino acids in the active site. By recycling D-aminoacyl-tRNA to D-amino acids and free tRNA molecules, this enzyme counteracts the toxicity associated with the formation of D-aminoacyl-tRNA entities in vivo and helps enforce protein L-homochirality. The protein is D-aminoacyl-tRNA deacylase of Pseudomonas syringae pv. syringae (strain B728a).